The chain runs to 229 residues: MDLLQFLAFLFVLLLSGMGATGTLRTSLDPSLEIYKKMFEVKRREQLLALKNLAQLNDIHQQYKILDVMLKGLFKVLEDSRTVLTAADVLPDGPFPQDEKLKDAFSHVVENTAFFGDVVLRFPRIVHYYFDHNSNWNLLIRWGISFCNQTGVFNQGPHSPILSLMAQELGISEKDSNFQNPFKIDRTEFIPSTDPFQKALREEEKRRKKEEKRKEIRKGPRISRSQSEL.

The signal sequence occupies residues 1–22 (MDLLQFLAFLFVLLLSGMGATG). A short sequence motif (prevents secretion from ER) is located at residue N148. N-linked (GlcNAc...) asparagine glycosylation occurs at N148. A disordered region spans residues 193–229 (TDPFQKALREEEKRRKKEEKRKEIRKGPRISRSQSEL). Positions 196-218 (FQKALREEEKRRKKEEKRKEIRK) form a coiled coil. Positions 206–213 (RRKKEEKR) match the Nuclear localization signal motif.

Belongs to the CCDC134 family. As to quaternary structure, interacts with TADA2A. Associates with the PCAF complex via TADA2A binding. In terms of processing, O-glycosylated, with additional sialic acid modifications. As to expression, expressed in cervical gland, cervical squamous epithelium, endometrium, stomach, kidney distal convoluted tubule, spermatogenic cells in testis, mammary gland, liver and striated muscle (at protein level). Also detected in placenta. Highest expression in testis relative to other tissues. Detected in T cells and dendritic cells; highly expressed in activated CD8(+) T cells, and also expressed at lower levels in CD4(+) T cells.

The protein localises to the endoplasmic reticulum lumen. Its subcellular location is the secreted. The protein resides in the cytoplasm. It localises to the nucleus. Molecular adapter required to prevent protein hyperglycosylation of HSP90B1: during translation, associates with nascent HSP90B1 and the STT3A catalytic component of the OST-A complex and tethers them to a specialized translocon that forms a microenvironment for HSP90B1 folding. In the CCDC134-containing translocon, STT3A associates with the SRT pseudosubstrate motif of HSP90B1, preventing access to facultative glycosylation sites until folding is completed, preventing hyperglycosylation and subsequent degradation of HSP90B1. In extracellular secreted form, promotes proliferation and activation of CD8(+) T-cells, suggesting a cytokine-like function. May inhibit ERK and JNK signaling activity. May suppress cell migration and invasion activity, via its effects on ERK and JNK signaling. May also localize in the nucleus: enhances stability of the PCAF histone acetyltransferase (HAT) complex member TADA2A and thus promotes PCAF-mediated histone acetyltransferase activity. Has a critical role in the regulation of osteogenesis and bone development. The chain is Coiled-coil domain-containing protein 134 from Homo sapiens (Human).